Reading from the N-terminus, the 796-residue chain is Kinesin-like protein KIF3C (796 aa).

Positions 10-367 (ALKVVARCRP…LRFANRAKNI (358 aa)) constitute a Kinesin motor domain. 97–104 (GQTGTGKT) serves as a coordination point for ATP. Disordered regions lie at residues 251–292 (ERQN…PKEA), 397–421 (EKKG…SAPA), and 754–796 (PSTS…VDHD). A compositionally biased stretch (gly residues) spans 270–284 (AGGGGGGGGTSGSGS). Residues 378–632 (KDTLLREFQE…NEQTRELKLK (255 aa)) adopt a coiled-coil conformation. Residues 401–416 (MLGKRPRRKSSRRKKA) are compositionally biased toward basic residues. Residues 633–793 (YLIIENFIPP…SAPLHPATVV (161 aa)) are globular.

The protein belongs to the TRAFAC class myosin-kinesin ATPase superfamily. Kinesin family. Kinesin II subfamily. Heterodimer of KIF3A and KIF3C.

It localises to the cytoplasm. It is found in the cytoskeleton. Functionally, microtubule-based anterograde translocator for membranous organelles. This chain is Kinesin-like protein KIF3C (Kif3c), found in Rattus norvegicus (Rat).